Reading from the N-terminus, the 115-residue chain is Large ribosomal subunit protein bL20c (115 aa).

It belongs to the bacterial ribosomal protein bL20 family.

The protein localises to the plastid. It is found in the chloroplast. Functionally, binds directly to 23S ribosomal RNA and is necessary for the in vitro assembly process of the 50S ribosomal subunit. It is not involved in the protein synthesizing functions of that subunit. The protein is Large ribosomal subunit protein bL20c of Pleurastrum terricola (Filamentous green alga).